The chain runs to 1447 residues: Sister chromatid cohesion protein PDS5 homolog B (1447 aa).

Residues 383-419 form an HEAT repeat; sequence LLVNDHLLNFVRERTLDKRWRVRKEAMMGLAQIYKKY. Residues 1117-1447 are disordered; it reads KSFFTPGKPK…RRRSAKRERR (331 aa). Lys-1136 is subject to N6-acetyllysine. Residues 1137 to 1155 show a composition bias toward polar residues; it reads PLSSAGKQSQTKSSRMETV. Residues Ser-1140, Ser-1162, Ser-1166, Ser-1176, Ser-1182, and Ser-1191 each carry the phosphoserine modification. The segment covering 1156-1167 has biased composition (low complexity); the sequence is SNASSSSNPSSP. Residues 1172-1184 show a composition bias toward basic and acidic residues; it reads GRLDSSEMDHSEN. Composition is skewed to basic and acidic residues over residues 1196–1214 and 1225–1243; these read KKSD…LEKP and QEEK…EQKP. The span at 1245–1254 shows a compositional bias: basic residues; the sequence is GSQRSRKRGH. Positions 1249-1261 form a DNA-binding region, a.T hook 1; it reads SRKRGHTASESDE. A Phosphothreonine modification is found at Thr-1255. Phosphoserine is present on residues Ser-1257 and Ser-1259. Basic and acidic residues predominate over residues 1265–1274; the sequence is PEEKRLKEDI. The residue at position 1283 (Ser-1283) is a Phosphoserine. The segment at residues 1287 to 1299 is a DNA-binding region (a.T hook 2); the sequence is KGKRGRPPKPLGG. Positions 1310 to 1319 are enriched in basic residues; sequence TSKKGSKKKS. Phosphoserine occurs at positions 1319 and 1334. Residues 1342–1353 are compositionally biased toward basic residues; that stretch reads KSKQHRVSRRAQ. The segment covering 1355–1372 has biased composition (polar residues); sequence RAESPESSAIESTQSTPQ. Phosphoserine is present on residues Ser-1358 and Ser-1366. Residue Thr-1367 is modified to Phosphothreonine. Ser-1369 carries the phosphoserine modification. Thr-1370 and Thr-1381 each carry phosphothreonine. The segment at residues 1372-1384 is a DNA-binding region (a.T hook 3); sequence QKGRGRPSKTPSP. The segment covering 1379–1388 has biased composition (low complexity); that stretch reads SKTPSPSQPK. Residues Ser-1383 and Ser-1417 each carry the phosphoserine modification. Residues 1422–1432 show a composition bias toward acidic residues; it reads IPQEETEEEEV. The span at 1437–1447 shows a compositional bias: basic residues; sequence VRRRSAKRERR.

Belongs to the PDS5 family. In terms of assembly, interacts with the cohesin complex. Interacts with RAD21; the interaction is direct. Interacts with WAPL (via FGF motifs) or CDCA5 (via the FGF motif); the interaction is direct, cohesin-dependent and competitive. In terms of tissue distribution, widely expressed.

The protein localises to the nucleus. Its function is as follows. Regulator of sister chromatid cohesion in mitosis which may stabilize cohesin complex association with chromatin. May couple sister chromatid cohesion during mitosis to DNA replication. Cohesion ensures that chromosome partitioning is accurate in both meiotic and mitotic cells and plays an important role in DNA repair. Plays a role in androgen-induced proliferative arrest in prostate cells. This Homo sapiens (Human) protein is Sister chromatid cohesion protein PDS5 homolog B (PDS5B).